A 679-amino-acid chain; its full sequence is Glycine--tRNA ligase beta subunit (679 aa).

It belongs to the class-II aminoacyl-tRNA synthetase family. Tetramer of two alpha and two beta subunits.

It localises to the cytoplasm. It carries out the reaction tRNA(Gly) + glycine + ATP = glycyl-tRNA(Gly) + AMP + diphosphate. The sequence is that of Glycine--tRNA ligase beta subunit from Streptococcus pyogenes serotype M1.